A 681-amino-acid chain; its full sequence is Probable L-type lectin-domain containing receptor kinase S.7 (681 aa).

The first 21 residues, 1 to 21 (MSLSRKLLVIFFTWITALSMS), serve as a signal peptide directing secretion. The Extracellular portion of the chain corresponds to 22–305 (KPIFVSSDNM…PSKKRRHRHN (284 aa)). Residues 30–265 (NMNFTFKSFT…IHLIENWSFK (236 aa)) are legume-lectin like. Asn32, Asn42, Asn86, Asn121, Asn135, Asn261, and Asn281 each carry an N-linked (GlcNAc...) asparagine glycan. A helical transmembrane segment spans residues 306–326 (LAIGLGISCPVLICLALFVFG). Over 327–681 (YFTLKKWKSV…EGDSIVYVVS (355 aa)) the chain is Cytoplasmic. The Protein kinase domain maps to 365 to 643 (FHSSRVIGRG…RVLQILNNEI (279 aa)). Residues 371–379 (IGRGAFGNV) and Lys394 contribute to the ATP site. Residue Asp493 is the Proton acceptor of the active site.

The protein in the C-terminal section; belongs to the protein kinase superfamily. Ser/Thr protein kinase family. This sequence in the N-terminal section; belongs to the leguminous lectin family.

The protein resides in the cell membrane. It catalyses the reaction L-seryl-[protein] + ATP = O-phospho-L-seryl-[protein] + ADP + H(+). It carries out the reaction L-threonyl-[protein] + ATP = O-phospho-L-threonyl-[protein] + ADP + H(+). Functionally, involved in resistance response to the pathogenic oomycetes Phytophthora infestans and Phytophthora capsici. The protein is Probable L-type lectin-domain containing receptor kinase S.7 of Arabidopsis thaliana (Mouse-ear cress).